Here is a 123-residue protein sequence, read N- to C-terminus: Neuropeptide-like peptides nlp-40 (123 aa).

The N-terminal stretch at Met-1–Ala-17 is a signal peptide. 3 consecutive propeptides follow at residues Arg-30–Ala-31, Lys-66–Arg-67, and Lys-75–Arg-76.

In terms of tissue distribution, expressed in intestinal cells.

It localises to the secreted. It is found in the cytoplasmic vesicle. Its function is as follows. Neuropeptide ligand for the G-protein coupled receptor aex-2. Activates and regulates the rhythmic calcium influx in DVB GABergic neurons during the defecation motor program, which is a coordinated series of three muscle contractions that occurs every 45 seconds. The sequence is that of Neuropeptide-like peptides nlp-40 from Caenorhabditis elegans.